The chain runs to 328 residues: UPF0421 protein SAUSA300_1870 (328 aa).

Helical transmembrane passes span 19-39 (IAIF…IYAI), 61-81 (LPAT…FGDQ), 108-128 (VAVL…IFNF), and 132-152 (TLTA…VFPP).

The protein belongs to the UPF0421 family.

Its subcellular location is the cell membrane. The polypeptide is UPF0421 protein SAUSA300_1870 (Staphylococcus aureus (strain USA300)).